The chain runs to 155 residues: Prespore-specific protein E (155 aa).

Positions Met-1–Ala-20 are cleaved as a signal peptide. Residues Asn-22, Asn-82, Asn-85, and Asn-102 are each glycosylated (N-linked (GlcNAc...) asparagine). An O-linked (GlcNAc) serine glycan is attached at Ser-105. Asn-133 is lipidated: GPI-like-anchor amidated asparagine. A propeptide spans Ser-134–Leu-155 (removed in mature form).

Post-translationally, the GPI-like-anchor contains a phosphoceramide group, rather than a phosphatidyl group.

The protein resides in the cell membrane. This chain is Prespore-specific protein E (pspE), found in Dictyostelium discoideum (Social amoeba).